Here is a 1030-residue protein sequence, read N- to C-terminus: Translation initiation factor IF-2 (1030 aa).

2 stretches are compositionally biased toward low complexity: residues 56 to 69 and 111 to 132; these read APSE…AADS and PNIV…APIK. 2 disordered regions span residues 56–361 and 394–434; these read APSE…KRRQ and SKPK…REQK. Positions 134–144 are enriched in basic and acidic residues; sequence ARPEKSAEKPE. Residues 154–164 are compositionally biased toward low complexity; sequence AASAEPAKSPS. The segment covering 188–206 has biased composition (basic and acidic residues); it reads LLRKPEIVRRSEAKPERTS. Over residues 259-273 the composition is skewed to low complexity; that stretch reads VAASASGVPAAASRV. Residues 522–695 enclose the tr-type G domain; it reads TRPPVVTVMG…LLVTEVEELV (174 aa). Residues 531–538 are G1; that stretch reads GHVDHGKT. Residue 531–538 coordinates GTP; sequence GHVDHGKT. The tract at residues 556-560 is G2; that stretch reads GITQH. The tract at residues 581–584 is G3; sequence DTPG. GTP contacts are provided by residues 581-585 and 635-638; these read DTPGH and NKCD. The segment at 635-638 is G4; sequence NKCD. Residues 671 to 673 form a G5 region; that stretch reads SAI.

This sequence belongs to the TRAFAC class translation factor GTPase superfamily. Classic translation factor GTPase family. IF-2 subfamily.

It is found in the cytoplasm. In terms of biological role, one of the essential components for the initiation of protein synthesis. Protects formylmethionyl-tRNA from spontaneous hydrolysis and promotes its binding to the 30S ribosomal subunits. Also involved in the hydrolysis of GTP during the formation of the 70S ribosomal complex. The polypeptide is Translation initiation factor IF-2 (Synechococcus elongatus (strain ATCC 33912 / PCC 7942 / FACHB-805) (Anacystis nidulans R2)).